The following is a 280-amino-acid chain: Apoptosis regulator ced-9 (280 aa).

The disordered stretch occupies residues 33 to 59; that stretch reads GTEPTDFGINSDAQDLPSPSRQASTRR. A compositionally biased stretch (polar residues) spans 43–59; it reads SDAQDLPSPSRQASTRR. The short motif at 80–99 is the BH4 element; it reads IEGFVVDYFTHRIRQNGMEW. The short motif at 160–179 is the BH1 element; that stretch reads QTDQCPMSYGRLIGLISFGG. A BH2 motif is present at residues 213–229; it reads NWKEHNRSWDDFMTLGK.

The protein belongs to the Bcl-2 family. As to quaternary structure, interacts with asymmetric homodimer ced-4; the interaction sequesters ced-4. Interacts with egl-1; the interaction results in ced-4 release. Interacts with dre-1; the interaction inhibits ced-9 activity, either directly or indirectly. Interacts with dct-1. May form a complex composed of ced-9, ced-4 and mac-1. Interacts with dynamin-related protein drp-1 (via residues 280-502); the interaction is enhanced by GTP rather than GDP; the interaction is probably direct and may occur at the mitochondrion. Interaction with drp-1 may be enhanced by interaction of ced-9 with egl-1, but not with ced-4. A ced-9/egl-1 complex may recruit drp-1 to the mitochondrial surface. Interacts with fzo-1; interaction may be suppressed by interaction of ced-9 with egl-1.

The protein localises to the perikaryon. It is found in the synapse. Its subcellular location is the endomembrane system. The protein resides in the mitochondrion membrane. It localises to the cytoplasm. Plays a major role in programmed cell death (PCD, apoptosis). egl-1 binds to and directly inhibits the activity of ced-9, releasing the cell death activator ced-4 from a ced-9/ced-4 containing protein complex and allowing ced-4 to activate the cell-killing caspase ced-3. During larval development, required for the elimination of transient presynaptic components downstream of egl-1 and upstream of ced-4 and ced-3 apoptotic pathway. Has been shown in one study to be dispensable in mitochondrial dynamics and morphology during early embryonic development. However, another study shows that a egl-1/ced-9 containing complex may promote drp-1-dependent mitochondrial fission. The polypeptide is Apoptosis regulator ced-9 (ced-9) (Caenorhabditis elegans).